The primary structure comprises 258 residues: Transcription factor RSL3 (258 aa).

The short motif at 98-105 is the D-box element; that stretch reads RKLLDVEN. The interval 119–178 is disordered; that stretch reads ELAKSKKKQRVSSESNTVDESNTNWVDGQSLSNSSDDEKASVTSVKGKTRATKGTATDPQ. The span at 130-152 shows a compositional bias: polar residues; sequence SSESNTVDESNTNWVDGQSLSNS. The interval 173–186 is basic motif; it reads TATDPQSLYARKRR. The bHLH domain occupies 173-222; it reads TATDPQSLYARKRREKINERLKTLQNLVPNGTKVDISTMLEEAVHYVKFL. Positions 187-222 are helix-loop-helix motif; the sequence is EKINERLKTLQNLVPNGTKVDISTMLEEAVHYVKFL.

In terms of assembly, homodimer. In terms of processing, ubiquitinated. Ubiquitination leads to its subsequent degradation by the 26S proteasome. In terms of tissue distribution, expressed constitutively in roots, leaves, and flowers. Expressed in root epidermal hair cells.

It localises to the nucleus. Its function is as follows. Transcription factor involved in the regulation of root hair elongation. Is sufficient to promote postmitotic cell growth in root-hair cells and is a direct transcriptional target of RHD6 and RSL1. Involved in the regulation of root hair elongation in response to low phosphate. Controls root hair cell growth by regulating the expression of genes encoding proteins involved in cell signaling, cell wall modification and secretion. This chain is Transcription factor RSL3, found in Arabidopsis thaliana (Mouse-ear cress).